We begin with the raw amino-acid sequence, 183 residues long: U3 small nucleolar ribonucleoprotein protein IMP3 (183 aa).

The S4 RNA-binding domain maps to 109 to 175 (RRLPVIMHRL…IKKTLLRYRN (67 aa)).

Belongs to the universal ribosomal protein uS4 family. In terms of assembly, component of a heterotrimeric complex containing IMP3, IMP4 and MPP10. Interacts with MPP10. Component of the ribosomal small subunit (SSU) processome composed of at least 40 protein subunits and snoRNA U3.

Its subcellular location is the nucleus. The protein localises to the nucleolus. Required for the early cleavages at sites A0, A1 and A2 during 18S ribosomal pre-RNA processing. In Saccharomyces cerevisiae (strain ATCC 204508 / S288c) (Baker's yeast), this protein is U3 small nucleolar ribonucleoprotein protein IMP3 (IMP3).